Here is a 1571-residue protein sequence, read N- to C-terminus: Pentafunctional AROM polypeptide (1571 aa).

The segment at 1–380 is 3-dehydroquinate synthase; it reads MTSVEKVSIL…YQLKAHQVSK (380 aa). NAD(+)-binding positions include 43 to 45, 81 to 84, 112 to 114, and Asp-117; these read DTN, ENNK, and GGV. Arg-128 is a 7-phospho-2-dehydro-3-deoxy-D-arabino-heptonate binding site. An NAD(+)-binding site is contributed by 137–138; the sequence is TS. Positions 144 and 150 each coordinate 7-phospho-2-dehydro-3-deoxy-D-arabino-heptonate. Lys-159 contributes to the NAD(+) binding site. Asn-160 is a binding site for 7-phospho-2-dehydro-3-deoxy-D-arabino-heptonate. NAD(+) contacts are provided by residues 177-180 and Asn-188; that span reads FLET. Glu-192 contributes to the Zn(2+) binding site. Residues 192-195 and Lys-244 contribute to the 7-phospho-2-dehydro-3-deoxy-D-arabino-heptonate site; that span reads EVVK. The Proton acceptor; for 3-dehydroquinate synthase activity role is filled by Glu-254. 7-phospho-2-dehydro-3-deoxy-D-arabino-heptonate-binding positions include 258–262 and His-265; that span reads RNLLN. Residue His-265 coordinates Zn(2+). His-269 (proton acceptor; for 3-dehydroquinate synthase activity) is an active-site residue. Residues His-281 and Lys-352 each coordinate 7-phospho-2-dehydro-3-deoxy-D-arabino-heptonate. Position 281 (His-281) interacts with Zn(2+). The interval 393 to 843 is EPSP synthase; that stretch reads VHPFDDKLIP…WDILHTKFKV (451 aa). Cys-825 (for EPSP synthase activity) is an active-site residue. The tract at residues 868–1058 is shikimate kinase; sequence KRSIIVIGMR…IPKKRSFYTS (191 aa). Residue 875–882 participates in ATP binding; that stretch reads GMRGAGKS. Residues 1059 to 1271 form a 3-dehydroquinase region; that stretch reads LTFSDLTEVA…GNEGALDVAQ (213 aa). Catalysis depends on Lys-1204, which acts as the Schiff-base intermediate with substrate; for 3-dehydroquinate dehydratase activity. The tract at residues 1284–1571 is shikimate dehydrogenase; sequence EKHFWIVGNP…DVVHDAVVNQ (288 aa).

This sequence in the N-terminal section; belongs to the sugar phosphate cyclases superfamily. Dehydroquinate synthase family. It in the 2nd section; belongs to the EPSP synthase family. The protein in the 3rd section; belongs to the shikimate kinase family. In the 4th section; belongs to the type-I 3-dehydroquinase family. This sequence in the C-terminal section; belongs to the shikimate dehydrogenase family. As to quaternary structure, homodimer. Zn(2+) is required as a cofactor.

It localises to the cytoplasm. It catalyses the reaction 7-phospho-2-dehydro-3-deoxy-D-arabino-heptonate = 3-dehydroquinate + phosphate. The catalysed reaction is 3-dehydroquinate = 3-dehydroshikimate + H2O. The enzyme catalyses shikimate + NADP(+) = 3-dehydroshikimate + NADPH + H(+). It carries out the reaction shikimate + ATP = 3-phosphoshikimate + ADP + H(+). It catalyses the reaction 3-phosphoshikimate + phosphoenolpyruvate = 5-O-(1-carboxyvinyl)-3-phosphoshikimate + phosphate. It participates in metabolic intermediate biosynthesis; chorismate biosynthesis; chorismate from D-erythrose 4-phosphate and phosphoenolpyruvate: step 2/7. It functions in the pathway metabolic intermediate biosynthesis; chorismate biosynthesis; chorismate from D-erythrose 4-phosphate and phosphoenolpyruvate: step 3/7. Its pathway is metabolic intermediate biosynthesis; chorismate biosynthesis; chorismate from D-erythrose 4-phosphate and phosphoenolpyruvate: step 4/7. The protein operates within metabolic intermediate biosynthesis; chorismate biosynthesis; chorismate from D-erythrose 4-phosphate and phosphoenolpyruvate: step 5/7. It participates in metabolic intermediate biosynthesis; chorismate biosynthesis; chorismate from D-erythrose 4-phosphate and phosphoenolpyruvate: step 6/7. Its function is as follows. The AROM polypeptide catalyzes 5 consecutive enzymatic reactions in prechorismate polyaromatic amino acid biosynthesis. The chain is Pentafunctional AROM polypeptide from Scheffersomyces stipitis (strain ATCC 58785 / CBS 6054 / NBRC 10063 / NRRL Y-11545) (Yeast).